Consider the following 1085-residue polypeptide: MSNPNQAAKTGQTNDAQNPASACPFKQPLIGIIPVRYAFDVYDDQGQALHPLPKADRQWKGQFSIKQRSYTLRQLRDGWLYVYDETAKTLHEYEVVGCKLTKIDWSDDEANKPTHERGSKGESKSCLLYPAQHTLSIGYAHQRWTWRVCEHMRSNTSSRHAVMRKVSLKQFESNGTHPHAHFAQYLEDYVADIGTPAEQDIFKDTCTPSLPVEKSEEAVKGTEFKFVADKAVVSSSDYLQDLPEQNCGLFVALNDPLADVSDLFVTFTTQVAKRTKAIGDETQQHKMQMAELTRTLGRIRLEEKEIPDFVKQDPIRILELERAITEYCATAKLAEIESHHLASEGHSPSGNYALMQQQAEQKLAELKTLYRFEPTSAQMRKWRKKDNSFIDEVRWADLDNFLVEHYTELKGLDEQIKQHYAQFMSAFNQLGLDPLLFGMDNQDEVQQAYLLALTSQFLVVVTQVNHDEKSLEILKKDLSFDSPKNLMALASTGFSLQANQAINNHIQGFSTAFLSTSNPSDMVAFATAIANWDTFTGDERIQEKAWFKRWIEPAQSSFGALQKAVANQAKESWQAVMELLFPYQNQPKGGTPSLLANLRLLLVESLVREEAVLQHNPKYAAELKQFETKLNAILQEMNDALELKPGNVSPKNHQIATAQSAQRKLGQLLSSELPMMLTLKNQAAMNTFQQSVNEKLSALSKNVKTSSASVSQKLGGLGGLLFALNLWNTMTVLENIRYKVAQYPSWNPFKNPALGEAIYATGNTIVVAGAISAGRAWVTIAEQGLLDRTLKNALNTTKVLGTKDALKTFAKSIALVATVGMIASALETWESWGKFNDSSKTDLERFGYLLKAGATGAQGIIFYIQFFTLLGSGIGGPSIAAISAGWMLAGFAVIGIVYLIGVILTNVFKRSELEIWLSKSTWGKESAHWPVGKELTELEHLLHRPSLRLSQVTQRKAAQWMDSGSLQWQLELTLPDYLKGQTIGLQITRLPAQPAYYQPQREAVTPILINEQQGKWSIEDNQPVYRITLGGSEKDTVGVCVALPLRWGKELSLKFYASGTRAGELDLQSAEANDIATRNLVVGKG.

A disordered region spans residues 1 to 20 (MSNPNQAAKTGQTNDAQNPA). A run of 4 helical transmembrane segments spans residues 753–773 (ALGE…AISA), 813–833 (IALV…ESWG), 860–880 (IIFY…PSIA), and 884–904 (AGWM…GVIL).

The protein resides in the secreted. It is found in the host membrane. In terms of biological role, toxin secreted by the type VI (T6SS) secretion system that acts on prokaryotic target cells. Acts in conjunction with VasW, an accessory protein to VasX, to compromise the inner membrane of prokaryotic target cells. This Vibrio cholerae serotype O1 (strain ATCC 39315 / El Tor Inaba N16961) protein is Toxin VasX.